A 173-amino-acid chain; its full sequence is Mesencephalic astrocyte-derived neurotrophic factor homolog (173 aa).

Positions 1–22 are cleaved as a signal peptide; sequence MKTWYMVVVIGFLATLAQTSLA. Cystine bridges form between cysteine 28-cysteine 114, cysteine 31-cysteine 103, cysteine 61-cysteine 72, and cysteine 148-cysteine 151.

It belongs to the ARMET family.

The protein localises to the secreted. Required during the maturation of the embryonic nervous system for maintenance of neuronal and cuticular connectivity. Essential for maintenance of dopaminergic neurons and dopamine levels. This chain is Mesencephalic astrocyte-derived neurotrophic factor homolog, found in Drosophila erecta (Fruit fly).